Here is a 338-residue protein sequence, read N- to C-terminus: L-asparaginase 1 (338 aa).

In terms of domain architecture, Asparaginase/glutaminase spans 4-329 (KSIYVAYTGG…ETIRKAMSQN (326 aa)). The active-site O-isoaspartyl threonine intermediate is Thr-14. Substrate contacts are provided by residues 59–61 (DSS) and 91–92 (TD).

It belongs to the asparaginase 1 family. As to quaternary structure, homotetramer.

The protein localises to the cytoplasm. The enzyme catalyses L-asparagine + H2O = L-aspartate + NH4(+). In Escherichia coli O157:H7, this protein is L-asparaginase 1 (ansA).